Reading from the N-terminus, the 239-residue chain is Immunoglobulin superfamily member 23 (239 aa).

Residues 63-93 form a disordered region; sequence ELEAQPPTSSSPKGLPGRPRTSQEVPNAEDN. In terms of domain architecture, Ig-like spans 94 to 179; it reads PSLIPLVTFP…ELVSEPVTVS (86 aa). A helical membrane pass occupies residues 214-234; the sequence is LIVAATIGGLVLIGSVCFYIL.

It localises to the cell membrane. In terms of biological role, may be involved in osteoclast differentiation. The polypeptide is Immunoglobulin superfamily member 23 (Mus musculus (Mouse)).